Reading from the N-terminus, the 271-residue chain is Acyl-[acyl-carrier-protein]--UDP-N-acetylglucosamine O-acyltransferase (271 aa).

It belongs to the transferase hexapeptide repeat family. LpxA subfamily. As to quaternary structure, homotrimer.

The protein resides in the cytoplasm. It carries out the reaction a (3R)-hydroxyacyl-[ACP] + UDP-N-acetyl-alpha-D-glucosamine = a UDP-3-O-[(3R)-3-hydroxyacyl]-N-acetyl-alpha-D-glucosamine + holo-[ACP]. It participates in glycolipid biosynthesis; lipid IV(A) biosynthesis; lipid IV(A) from (3R)-3-hydroxytetradecanoyl-[acyl-carrier-protein] and UDP-N-acetyl-alpha-D-glucosamine: step 1/6. In terms of biological role, involved in the biosynthesis of lipid A, a phosphorylated glycolipid that anchors the lipopolysaccharide to the outer membrane of the cell. The polypeptide is Acyl-[acyl-carrier-protein]--UDP-N-acetylglucosamine O-acyltransferase (Azorhizobium caulinodans (strain ATCC 43989 / DSM 5975 / JCM 20966 / LMG 6465 / NBRC 14845 / NCIMB 13405 / ORS 571)).